A 528-amino-acid polypeptide reads, in one-letter code: Phenylalanine--tRNA ligase alpha subunit (528 aa).

L-phenylalanine contacts are provided by Thr-365 and Phe-444. Position 446 (Glu-446) interacts with Mg(2+). Residue Phe-469 participates in L-phenylalanine binding.

Belongs to the class-II aminoacyl-tRNA synthetase family. Phe-tRNA synthetase alpha subunit type 2 subfamily. In terms of assembly, tetramer of two alpha and two beta subunits. It depends on Mg(2+) as a cofactor.

The protein localises to the cytoplasm. The catalysed reaction is tRNA(Phe) + L-phenylalanine + ATP = L-phenylalanyl-tRNA(Phe) + AMP + diphosphate + H(+). In Borreliella burgdorferi (strain ATCC 35210 / DSM 4680 / CIP 102532 / B31) (Borrelia burgdorferi), this protein is Phenylalanine--tRNA ligase alpha subunit.